The following is a 208-amino-acid chain: Thymidylate kinase (208 aa).

13 to 20 (GLEGAGKS) contributes to the ATP binding site.

Belongs to the thymidylate kinase family.

It carries out the reaction dTMP + ATP = dTDP + ADP. Functionally, phosphorylation of dTMP to form dTDP in both de novo and salvage pathways of dTTP synthesis. The sequence is that of Thymidylate kinase from Shewanella amazonensis (strain ATCC BAA-1098 / SB2B).